Consider the following 198-residue polypeptide: Shikimate kinase (198 aa).

26–31 (GSGKSQ) contributes to the ATP binding site. Mg(2+) is bound at residue Ser30. 3 residues coordinate substrate: Asp48, Arg72, and Gly94. An ATP-binding site is contributed by Arg132. Arg151 provides a ligand contact to substrate. Gln167 lines the ATP pocket.

Belongs to the shikimate kinase family. In terms of assembly, monomer. Requires Mg(2+) as cofactor.

The protein resides in the cytoplasm. The catalysed reaction is shikimate + ATP = 3-phosphoshikimate + ADP + H(+). Its pathway is metabolic intermediate biosynthesis; chorismate biosynthesis; chorismate from D-erythrose 4-phosphate and phosphoenolpyruvate: step 5/7. Functionally, catalyzes the specific phosphorylation of the 3-hydroxyl group of shikimic acid using ATP as a cosubstrate. The polypeptide is Shikimate kinase (Prochlorococcus marinus (strain NATL2A)).